Here is a 514-residue protein sequence, read N- to C-terminus: Na(+)/H(+) antiporter NhaB (514 aa).

Transmembrane regions (helical) follow at residues 23-43 (LALL…PFVA), 63-83 (PLLP…TSAA), 97-117 (LLLM…LFIF), 120-140 (LLLS…AAAF), 144-164 (FLDA…FYGI), 202-222 (LMMH…VGEP), 238-258 (FFLR…LTCM), 303-323 (AVIG…VGLI), 357-377 (LTVF…APII), 391-411 (LFYL…VGTI), 447-467 (ATPN…APLI), and 475-495 (VWMA…CVEF).

This sequence belongs to the NhaB Na(+)/H(+) (TC 2.A.34) antiporter family.

Its subcellular location is the cell inner membrane. It catalyses the reaction 2 Na(+)(in) + 3 H(+)(out) = 2 Na(+)(out) + 3 H(+)(in). Functionally, na(+)/H(+) antiporter that extrudes sodium in exchange for external protons. The polypeptide is Na(+)/H(+) antiporter NhaB (Salmonella agona (strain SL483)).